The sequence spans 995 residues: UPF0182 protein MMAR_1371 (995 aa).

7 helical membrane-spanning segments follow: residues 18–38 (VLIL…RLID), 63–83 (FLVF…GLAL), 113–133 (LFGI…AQSY), 175–195 (FVAI…FGGI), 210–230 (IQLV…YWLD), 259–279 (KLIL…AIVL), and 287–307 (IGLV…PMIV). The disordered stretch occupies residues 900 to 948 (AATGIQPTEGGAPANVPPNNAPSPEALPGTPPSPPTAVPPAPEASVTLS). The segment covering 928–941 (GTPPSPPTAVPPAP) has biased composition (pro residues).

This sequence belongs to the UPF0182 family.

It is found in the cell membrane. In Mycobacterium marinum (strain ATCC BAA-535 / M), this protein is UPF0182 protein MMAR_1371.